A 405-amino-acid polypeptide reads, in one-letter code: Cystathionine gamma-lyase (405 aa).

Positions 62, 114, and 119 each coordinate substrate. Lys-212 is modified (N6-(pyridoxal phosphate)lysine). Glu-339 is a substrate binding site.

Belongs to the trans-sulfuration enzymes family. As to quaternary structure, homotetramer. Interacts with CALM in a calcium-dependent manner. Pyridoxal 5'-phosphate serves as cofactor.

It localises to the cytoplasm. It carries out the reaction L,L-cystathionine + H2O = 2-oxobutanoate + L-cysteine + NH4(+). It functions in the pathway amino-acid biosynthesis; L-cysteine biosynthesis; L-cysteine from L-homocysteine and L-serine: step 2/2. Catalyzes the last step in the trans-sulfuration pathway from methionine to cysteine. Has broad substrate specificity. Converts cystathionine to cysteine, ammonia and 2-oxobutanoate. Converts two cysteine molecules to lanthionine and hydrogen sulfide. Can also accept homocysteine as substrate. Specificity depends on the levels of the endogenous substrates. Generates the endogenous signaling molecule hydrogen sulfide (H2S), and so contributes to the regulation of blood pressure. Acts as a cysteine-protein sulfhydrase by mediating sulfhydration of target proteins: sulfhydration consists of converting -SH groups into -SSH on specific cysteine residues of target proteins such as GAPDH, PTPN1 and NF-kappa-B subunit RELA, thereby regulating their function. The sequence is that of Cystathionine gamma-lyase (CTH) from Bos taurus (Bovine).